Consider the following 358-residue polypeptide: tRNA-specific 2-thiouridylase MnmA (358 aa).

Residues 7–14 and M33 each bind ATP; that span reads AMSGGVDS. C102 serves as the catalytic Nucleophile. Cysteines 102 and 199 form a disulfide. Position 126 (G126) interacts with ATP. The tract at residues 149 to 151 is interaction with tRNA; it reads KDQ. The active-site Cysteine persulfide intermediate is C199. The segment at 305 to 306 is interaction with tRNA; sequence RY.

This sequence belongs to the MnmA/TRMU family.

The protein resides in the cytoplasm. The enzyme catalyses S-sulfanyl-L-cysteinyl-[protein] + uridine(34) in tRNA + AH2 + ATP = 2-thiouridine(34) in tRNA + L-cysteinyl-[protein] + A + AMP + diphosphate + H(+). Functionally, catalyzes the 2-thiolation of uridine at the wobble position (U34) of tRNA, leading to the formation of s(2)U34. The polypeptide is tRNA-specific 2-thiouridylase MnmA (Halothermothrix orenii (strain H 168 / OCM 544 / DSM 9562)).